A 923-amino-acid polypeptide reads, in one-letter code: Dynein axonemal intermediate chain 3 (923 aa).

The interval 1–35 (MAPKPPKSPKGQKKGKKNMKQQLLVPEEEEPMNME) is disordered. Residues 10–19 (KGQKKGKKNM) show a composition bias toward basic residues. WD repeat units follow at residues 398 to 438 (ESPD…DRIE), 480 to 536 (GHRK…PAVT), 702 to 741 (VHDGAVHTIQRSPFFNDIVLTVGGWNVAIWKEEVMTGPLL), and 745 to 785 (CGPK…HEPA). The stretch at 869-889 (LELVKKKAKIYQKTKEQMEAE) forms a coiled coil.

In terms of assembly, interacts with ACTR2; this interaction reduces binding of the Arp2/3 complex to the VCA domain of nucleation promoting factors. Part of the multisubunit axonemal dynein complex formed at least of two heavy chains and a number of intermediate and light chains. Found in a associated with the catalytic heavy chain DNAH2, the intermediate chain DNAI4, and the light chain DYNLT1. Strongly expressed in the testes. Detected also in brain and lung tissues.

The protein resides in the cytoplasm. Functionally, acts as a negative regulator of cell migration, invasion, and metastasis downstream of p53/TP53, through inhibition of Arp2/3 complex-mediated actin polymerization. Via its association with the multisubunit axonemal dynein complex, is potentially involved in the regulation of cilia function. May play a role in osteogenesis of dental tissue-derived mesenchymal stem cells. The polypeptide is Dynein axonemal intermediate chain 3 (Dnai3) (Mus musculus (Mouse)).